A 203-amino-acid polypeptide reads, in one-letter code: NADH-quinone oxidoreductase subunit C (203 aa).

The protein belongs to the complex I 30 kDa subunit family. NDH-1 is composed of 14 different subunits. Subunits NuoB, C, D, E, F, and G constitute the peripheral sector of the complex.

The protein resides in the cell inner membrane. The enzyme catalyses a quinone + NADH + 5 H(+)(in) = a quinol + NAD(+) + 4 H(+)(out). In terms of biological role, NDH-1 shuttles electrons from NADH, via FMN and iron-sulfur (Fe-S) centers, to quinones in the respiratory chain. The immediate electron acceptor for the enzyme in this species is believed to be ubiquinone. Couples the redox reaction to proton translocation (for every two electrons transferred, four hydrogen ions are translocated across the cytoplasmic membrane), and thus conserves the redox energy in a proton gradient. The chain is NADH-quinone oxidoreductase subunit C from Delftia acidovorans (strain DSM 14801 / SPH-1).